A 153-amino-acid chain; its full sequence is Large ribosomal subunit protein uL15 (153 aa).

The disordered stretch occupies residues arginine 21 to arginine 41. The span at isoleucine 23–isoleucine 35 shows a compositional bias: gly residues.

This sequence belongs to the universal ribosomal protein uL15 family. Part of the 50S ribosomal subunit.

In terms of biological role, binds to the 23S rRNA. This Rickettsia felis (strain ATCC VR-1525 / URRWXCal2) (Rickettsia azadi) protein is Large ribosomal subunit protein uL15.